Here is an 80-residue protein sequence, read N- to C-terminus: Polcalcin Cyn d 7 (80 aa).

2 EF-hand domains span residues Ala-2 to Thr-37 and Asp-40 to Leu-72. Residues Asp-15, Asn-17, Asp-19, Lys-21, Glu-26, Asp-50, Asp-52, Asp-54, and Glu-61 each contribute to the Ca(2+) site.

The polypeptide is Polcalcin Cyn d 7 (Cynodon dactylon (Bermuda grass)).